We begin with the raw amino-acid sequence, 527 residues long: CTP synthase (527 aa).

The interval Met1–Leu270 is amidoligase domain. Ser12 is a CTP binding site. Ser12 lines the UTP pocket. Residues Gly13–Ile18 and Asp70 each bind ATP. Asp70 and Glu145 together coordinate Mg(2+). Residues Asp152–Glu154, Lys191–Gln196, and Lys227 contribute to the CTP site. UTP contacts are provided by residues Lys191–Gln196 and Lys227. Residues Thr292 to Lys525 enclose the Glutamine amidotransferase type-1 domain. An L-glutamine-binding site is contributed by Gly349. Catalysis depends on Cys376, which acts as the Nucleophile; for glutamine hydrolysis. L-glutamine-binding positions include Leu377–Gln380, Glu400, and Arg455. Residues His498 and Glu500 contribute to the active site.

This sequence belongs to the CTP synthase family. In terms of assembly, homotetramer.

The catalysed reaction is UTP + L-glutamine + ATP + H2O = CTP + L-glutamate + ADP + phosphate + 2 H(+). The enzyme catalyses L-glutamine + H2O = L-glutamate + NH4(+). It catalyses the reaction UTP + NH4(+) + ATP = CTP + ADP + phosphate + 2 H(+). It participates in pyrimidine metabolism; CTP biosynthesis via de novo pathway; CTP from UDP: step 2/2. Its activity is regulated as follows. Allosterically activated by GTP, when glutamine is the substrate; GTP has no effect on the reaction when ammonia is the substrate. The allosteric effector GTP functions by stabilizing the protein conformation that binds the tetrahedral intermediate(s) formed during glutamine hydrolysis. Inhibited by the product CTP, via allosteric rather than competitive inhibition. Its function is as follows. Catalyzes the ATP-dependent amination of UTP to CTP with either L-glutamine or ammonia as the source of nitrogen. Regulates intracellular CTP levels through interactions with the four ribonucleotide triphosphates. This Methanospirillum hungatei JF-1 (strain ATCC 27890 / DSM 864 / NBRC 100397 / JF-1) protein is CTP synthase.